Here is a 446-residue protein sequence, read N- to C-terminus: GRAM domain-containing protein 2B (446 aa).

M1 bears the N-acetylmethionine mark. The segment at 1–120 (MVKKRLPSND…RKKSSSSSQY (120 aa)) is disordered. Residues 29-43 (SRSSTDSPSSVFFSS) show a composition bias toward low complexity. Residues 95 to 113 (DKNDCKTESKNDPKTERKK) show a composition bias toward basic and acidic residues. The GRAM domain occupies 124–191 (MHFHKLFLSV…FSVTLIKKTK (68 aa)). Positions 234–247 (TSVGNSPNPSSAEN) are enriched in polar residues. The interval 234-253 (TSVGNSPNPSSAENSFRADR) is disordered. Phosphoserine is present on residues S239, S256, and S266. Residues 276–298 (RQDMEGYSSSGSQTPESENSRDF) form a disordered region. The span at 282–292 (YSSSGSQTPES) shows a compositional bias: polar residues.

In Pongo abelii (Sumatran orangutan), this protein is GRAM domain-containing protein 2B (GRAMD2B).